Reading from the N-terminus, the 217-residue chain is 3,4-dihydroxy-2-butanone 4-phosphate synthase (217 aa).

D-ribulose 5-phosphate contacts are provided by residues 37 to 38 (RE), D42, 150 to 154 (RGGHT), and E174. Residue E38 coordinates Mg(2+). H153 lines the Mg(2+) pocket.

It belongs to the DHBP synthase family. Homodimer. Mg(2+) serves as cofactor. Requires Mn(2+) as cofactor.

The enzyme catalyses D-ribulose 5-phosphate = (2S)-2-hydroxy-3-oxobutyl phosphate + formate + H(+). The protein operates within cofactor biosynthesis; riboflavin biosynthesis; 2-hydroxy-3-oxobutyl phosphate from D-ribulose 5-phosphate: step 1/1. Catalyzes the conversion of D-ribulose 5-phosphate to formate and 3,4-dihydroxy-2-butanone 4-phosphate. This is 3,4-dihydroxy-2-butanone 4-phosphate synthase from Pectobacterium atrosepticum (strain SCRI 1043 / ATCC BAA-672) (Erwinia carotovora subsp. atroseptica).